The following is a 436-amino-acid chain: Serine hydroxymethyltransferase (436 aa).

Residues Leu133 and Gly137–Ile139 contribute to the (6S)-5,6,7,8-tetrahydrofolate site. The residue at position 242 (Lys242) is an N6-(pyridoxal phosphate)lysine.

Belongs to the SHMT family. As to quaternary structure, homodimer. Pyridoxal 5'-phosphate serves as cofactor.

It localises to the cytoplasm. The enzyme catalyses (6R)-5,10-methylene-5,6,7,8-tetrahydrofolate + glycine + H2O = (6S)-5,6,7,8-tetrahydrofolate + L-serine. Its pathway is one-carbon metabolism; tetrahydrofolate interconversion. The protein operates within amino-acid biosynthesis; glycine biosynthesis; glycine from L-serine: step 1/1. Functionally, catalyzes the reversible interconversion of serine and glycine with tetrahydrofolate (THF) serving as the one-carbon carrier. This reaction serves as the major source of one-carbon groups required for the biosynthesis of purines, thymidylate, methionine, and other important biomolecules. Also exhibits THF-independent aldolase activity toward beta-hydroxyamino acids, producing glycine and aldehydes, via a retro-aldol mechanism. This chain is Serine hydroxymethyltransferase, found in Pelagibacter ubique (strain HTCC1062).